Reading from the N-terminus, the 358-residue chain is Short chain dehydrogenase sor7 (358 aa).

The tract at residues 1–22 (MSSPAIGQPPIPPTPTDANISG) is disordered. NADP(+) is bound by residues Leu-34, Asp-88, Asn-115, Tyr-206, Lys-210, Val-238, and Thr-240. Catalysis depends on Tyr-206, which acts as the Proton donor. Residue Lys-210 is the Lowers pKa of active site Tyr of the active site.

This sequence belongs to the short-chain dehydrogenases/reductases (SDR) family.

It functions in the pathway secondary metabolite biosynthesis. In terms of biological role, short chain dehydrogenase; part of the SOR gene cluster that mediates the biosynthesis of sorbicillinoids, a diverse group of yellow secondary metabolites that restrict growth of competing pathogenic fungi but not of bacteria. Sorbicillinoids biosynthesis requires the action of two PKSs. The SOR cluster is required for the production of trichodimerol and dihydrotrichotetronin, with sor2 being sufficient for production of trichodimerol, but not dihydrotrichotetronin in the light. Sor1 iteratively combines three acetyl units and the growing chain is modified by the ketoacyl reductase subunit, and optional by the enoyl reductase subunit in the second cycle. The polyketide is then handed over to the PKS sor2, which adds three more acetyl units, and two methyl groups. Sor2 releases an aldehyde, which undergoes spontaneous cyclization resulting in the formation of sorbicillin or 2',3'-dihydrosorbicillin. The monooxygenase sor5 oxidizes sorbicillin and 2',3'-dihydrosorbicillin to 2',3'-dihydrosorbicillinol and sorbicillinol, respectively. The oxidoreductase sor8 further converts sorbicillinol into oxosorbicillinol. Sorbicillinol is the building block for the other sorbicillinoids such as disorbicillinol, bisvertinolon, dihydrobisvertinolone, and dihydrotrichotetronine. The polypeptide is Short chain dehydrogenase sor7 (Hypocrea jecorina (strain QM6a) (Trichoderma reesei)).